Consider the following 665-residue polypeptide: DNA ligase (665 aa).

Residues D31 to D35, S80 to L81, and E110 contribute to the NAD(+) site. K112 functions as the N6-AMP-lysine intermediate in the catalytic mechanism. R133, E170, K285, and K309 together coordinate NAD(+). Positions 403, 406, 421, and 427 each coordinate Zn(2+). A BRCT domain is found at G587–S665.

It belongs to the NAD-dependent DNA ligase family. LigA subfamily. Mg(2+) is required as a cofactor. Requires Mn(2+) as cofactor.

The catalysed reaction is NAD(+) + (deoxyribonucleotide)n-3'-hydroxyl + 5'-phospho-(deoxyribonucleotide)m = (deoxyribonucleotide)n+m + AMP + beta-nicotinamide D-nucleotide.. Functionally, DNA ligase that catalyzes the formation of phosphodiester linkages between 5'-phosphoryl and 3'-hydroxyl groups in double-stranded DNA using NAD as a coenzyme and as the energy source for the reaction. It is essential for DNA replication and repair of damaged DNA. This chain is DNA ligase, found in Bacteroides fragilis (strain ATCC 25285 / DSM 2151 / CCUG 4856 / JCM 11019 / LMG 10263 / NCTC 9343 / Onslow / VPI 2553 / EN-2).